We begin with the raw amino-acid sequence, 323 residues long: tRNA U34 carboxymethyltransferase (323 aa).

Residues K91, W105, K110, G130, 152–154, 181–182, M196, Y200, and R315 each bind carboxy-S-adenosyl-L-methionine; these read DPT and IE.

Belongs to the class I-like SAM-binding methyltransferase superfamily. CmoB family. In terms of assembly, homotetramer.

It carries out the reaction carboxy-S-adenosyl-L-methionine + 5-hydroxyuridine(34) in tRNA = 5-carboxymethoxyuridine(34) in tRNA + S-adenosyl-L-homocysteine + H(+). Functionally, catalyzes carboxymethyl transfer from carboxy-S-adenosyl-L-methionine (Cx-SAM) to 5-hydroxyuridine (ho5U) to form 5-carboxymethoxyuridine (cmo5U) at position 34 in tRNAs. This Shigella boydii serotype 18 (strain CDC 3083-94 / BS512) protein is tRNA U34 carboxymethyltransferase.